The primary structure comprises 400 residues: Large envelope protein (400 aa).

At methionine 1 the chain carries N-acetylmethionine. Glycine 2 carries the N-myristoyl glycine; by host lipid modification. A pre-S1 region spans residues 2 to 119 (GGWSSKHRKG…PPLRDTHPQA (118 aa)). Positions 2 to 174 (GGWSSKHRKG…FTKTGDPASN (173 aa)) are pre-S. The Virion surface; in external conformation segment spans residues 2–181 (GGWSSKHRKG…ASNMESTTSG (180 aa)). Topologically, residues 2–253 (GGWSSKHRKG…PGYRWMCLRR (252 aa)) are intravirion; in internal conformation. An N-linked (GlcNAc...) asparagine glycan is attached at tryptophan 4. The disordered stretch occupies residues 89 to 117 (PAAPPPASTNRQSGRQPTPISPPLRDTHP). Residues 96–106 (STNRQSGRQPT) show a composition bias toward polar residues. A pre-S2 region spans residues 120 to 174 (MQWNSTAFHQALQDPRVRGLYFPAGGSSSGTVNPVPNTVSHISSIFTKTGDPASN). A helical transmembrane segment spans residues 182 to 202 (FLGPLLVLQAGFFLLTRILTI). At 203 to 253 (PQSLDSWWTSLNFLGGAPGCIGQNSQSQTSNHSPTSCPPTCPGYRWMCLRR) the chain is on the intravirion; in external conformation side. Residues 254–274 (FIIFLFILLLCLIFLLVLLDY) traverse the membrane as a helical segment. The Virion surface portion of the chain corresponds to 275 to 348 (QGMLPVCPLL…WASVRFSWLS (74 aa)). N-linked (GlcNAc...) asparagine; by host glycosylation is present at asparagine 320. A helical transmembrane segment spans residues 349 to 369 (LLVPFVQWFAGLSPTVWLSVI). Residues 370–375 (WMIWYW) lie on the Intravirion side of the membrane. A helical transmembrane segment spans residues 376-398 (GPSLYNILSPFLPLLPIFLCLWV). Over 399–400 (YI) the chain is Virion surface.

This sequence belongs to the orthohepadnavirus major surface antigen family. In its internal form (Li-HBsAg), interacts with the capsid protein and with the isoform S. Interacts with host chaperone CANX. In terms of assembly, associates with host chaperone CANX through its pre-S2 N glycan; this association may be essential for isoform M proper secretion. As to quaternary structure, interacts with isoform L. Interacts with the antigens of satellite virus HDV (HDVAgs); this interaction is required for encapsidation of HDV genomic RNA. In terms of processing, isoform M is N-terminally acetylated by host at a ratio of 90%, and N-glycosylated by host at the pre-S2 region. Post-translationally, myristoylated.

It is found in the virion membrane. In terms of biological role, the large envelope protein exists in two topological conformations, one which is termed 'external' or Le-HBsAg and the other 'internal' or Li-HBsAg. In its external conformation the protein attaches the virus to cell receptors and thereby initiating infection. This interaction determines the species specificity and liver tropism. This attachment induces virion internalization predominantly through caveolin-mediated endocytosis. The large envelope protein also assures fusion between virion membrane and endosomal membrane. In its internal conformation the protein plays a role in virion morphogenesis and mediates the contact with the nucleocapsid like a matrix protein. Functionally, the middle envelope protein plays an important role in the budding of the virion. It is involved in the induction of budding in a nucleocapsid independent way. In this process the majority of envelope proteins bud to form subviral lipoprotein particles of 22 nm of diameter that do not contain a nucleocapsid. This chain is Large envelope protein, found in Homo sapiens (Human).